The sequence spans 121 residues: Large ribosomal subunit protein bL12 (121 aa).

The protein belongs to the bacterial ribosomal protein bL12 family. Homodimer. Part of the ribosomal stalk of the 50S ribosomal subunit. Forms a multimeric L10(L12)X complex, where L10 forms an elongated spine to which 2 to 4 L12 dimers bind in a sequential fashion. Binds GTP-bound translation factors.

Its function is as follows. Forms part of the ribosomal stalk which helps the ribosome interact with GTP-bound translation factors. Is thus essential for accurate translation. In Shewanella baltica (strain OS223), this protein is Large ribosomal subunit protein bL12.